A 427-amino-acid chain; its full sequence is Trigger factor (427 aa).

One can recognise a PPIase FKBP-type domain in the interval 163–248; it reads GDTVVIDFVG…IHEVKAKEVP (86 aa).

This sequence belongs to the FKBP-type PPIase family. Tig subfamily.

It localises to the cytoplasm. The enzyme catalyses [protein]-peptidylproline (omega=180) = [protein]-peptidylproline (omega=0). Involved in protein export. Acts as a chaperone by maintaining the newly synthesized protein in an open conformation. Functions as a peptidyl-prolyl cis-trans isomerase. In Streptococcus suis (strain 05ZYH33), this protein is Trigger factor.